Reading from the N-terminus, the 346-residue chain is Biotin synthase (346 aa).

One can recognise a Radical SAM core domain in the interval 38–256; the sequence is QQVQVSTLLS…IAVARIMMPT (219 aa). Residues cysteine 53, cysteine 57, and cysteine 60 each contribute to the [4Fe-4S] cluster site. 4 residues coordinate [2Fe-2S] cluster: cysteine 97, cysteine 128, cysteine 188, and arginine 260.

The protein belongs to the radical SAM superfamily. Biotin synthase family. As to quaternary structure, homodimer. [4Fe-4S] cluster is required as a cofactor. The cofactor is [2Fe-2S] cluster.

It catalyses the reaction (4R,5S)-dethiobiotin + (sulfur carrier)-SH + 2 reduced [2Fe-2S]-[ferredoxin] + 2 S-adenosyl-L-methionine = (sulfur carrier)-H + biotin + 2 5'-deoxyadenosine + 2 L-methionine + 2 oxidized [2Fe-2S]-[ferredoxin]. Its pathway is cofactor biosynthesis; biotin biosynthesis; biotin from 7,8-diaminononanoate: step 2/2. In terms of biological role, catalyzes the conversion of dethiobiotin (DTB) to biotin by the insertion of a sulfur atom into dethiobiotin via a radical-based mechanism. This chain is Biotin synthase, found in Salmonella newport (strain SL254).